We begin with the raw amino-acid sequence, 304 residues long: Aspartate carbamoyltransferase catalytic subunit (304 aa).

2 residues coordinate carbamoyl phosphate: R57 and T58. K85 is an L-aspartate binding site. Residues R107, H134, and Q137 each coordinate carbamoyl phosphate. L-aspartate contacts are provided by R167 and R216. The carbamoyl phosphate site is built by A260 and P261.

Belongs to the aspartate/ornithine carbamoyltransferase superfamily. ATCase family. Heterododecamer (2C3:3R2) of six catalytic PyrB chains organized as two trimers (C3), and six regulatory PyrI chains organized as three dimers (R2).

The catalysed reaction is carbamoyl phosphate + L-aspartate = N-carbamoyl-L-aspartate + phosphate + H(+). The protein operates within pyrimidine metabolism; UMP biosynthesis via de novo pathway; (S)-dihydroorotate from bicarbonate: step 2/3. In terms of biological role, catalyzes the condensation of carbamoyl phosphate and aspartate to form carbamoyl aspartate and inorganic phosphate, the committed step in the de novo pyrimidine nucleotide biosynthesis pathway. The polypeptide is Aspartate carbamoyltransferase catalytic subunit (Fusobacterium nucleatum subsp. nucleatum (strain ATCC 25586 / DSM 15643 / BCRC 10681 / CIP 101130 / JCM 8532 / KCTC 2640 / LMG 13131 / VPI 4355)).